We begin with the raw amino-acid sequence, 156 residues long: Small ribosomal subunit protein uS7 (156 aa).

This sequence belongs to the universal ribosomal protein uS7 family. Part of the 30S ribosomal subunit. Contacts proteins S9 and S11.

In terms of biological role, one of the primary rRNA binding proteins, it binds directly to 16S rRNA where it nucleates assembly of the head domain of the 30S subunit. Is located at the subunit interface close to the decoding center, probably blocks exit of the E-site tRNA. The protein is Small ribosomal subunit protein uS7 of Synechococcus sp. (strain CC9605).